The sequence spans 418 residues: Deubiquitinase and deneddylase Dub1 (418 aa).

Polar residues predominate over residues 1-10 (MLSPTNSISK). Residues 1-23 (MLSPTNSISKTAPVPPQDSSKPV) form a disordered region. The chain crosses the membrane as a helical span at residues 40–60 (TALAVLLVVVTLGLILLFYSF). The interval 72-144 (TRPSTKEQPT…PLPPKAPKPV (73 aa)) is disordered. Residues 86 to 141 (VPLPSPPLAVPRPSTPPPPVISRPSTPPAPTPAISPPSTPSAPKPSTPPPLPPKAP) are compositionally biased toward pro residues. Active-site residues include histidine 288, aspartate 305, and cysteine 358.

This sequence belongs to the peptidase C48 family.

The protein localises to the secreted. It localises to the host cell. It is found in the membrane. Its function is as follows. Effector proteins function to alter host cell physiology and promote bacterial survival in host tissues. This protease possesses deubiquitinating and deneddylating activities. This is Deubiquitinase and deneddylase Dub1 (cdu1) from Chlamydia trachomatis serovar B (strain Jali20/OT).